Here is a 388-residue protein sequence, read N- to C-terminus: Mannitol-1-phosphate 5-dehydrogenase (388 aa).

5–16 contacts NAD(+); it reads AVHFGGGNIGRG. The active site involves K213.

Belongs to the mannitol dehydrogenase family. Monomer.

It catalyses the reaction D-mannitol 1-phosphate + NAD(+) = beta-D-fructose 6-phosphate + NADH + H(+). Functionally, catalyzes the NAD(H)-dependent interconversion of D-fructose 6-phosphate and D-mannitol 1-phosphate in the mannitol metabolic pathway. This Ajellomyces capsulatus (strain NAm1 / WU24) (Darling's disease fungus) protein is Mannitol-1-phosphate 5-dehydrogenase.